Here is a 203-residue protein sequence, read N- to C-terminus: Small ribosomal subunit protein uS4 (203 aa).

One can recognise an S4 RNA-binding domain in the interval 93–156 (RRLDNVVYRL…MKVPAILEAV (64 aa)).

Belongs to the universal ribosomal protein uS4 family. Part of the 30S ribosomal subunit. Contacts protein S5. The interaction surface between S4 and S5 is involved in control of translational fidelity.

Functionally, one of the primary rRNA binding proteins, it binds directly to 16S rRNA where it nucleates assembly of the body of the 30S subunit. With S5 and S12 plays an important role in translational accuracy. The sequence is that of Small ribosomal subunit protein uS4 from Streptococcus pyogenes serotype M4 (strain MGAS10750).